The primary structure comprises 381 residues: Neuropeptide Y receptor type 2 (381 aa).

The disordered stretch occupies residues Met1–Pro37. The Extracellular segment spans residues Met1 to Val52. Asn11 is a glycosylation site (N-linked (GlcNAc...) asparagine). The chain crosses the membrane as a helical span at residues Val53–Ile73. At His74–Asn87 the chain is on the cytoplasmic side. The chain crosses the membrane as a helical span at residues Phe88–Thr108. Topologically, residues Leu109–His125 are extracellular. Cys124 and Cys204 form a disulfide bridge. Residues Leu126–Ala146 traverse the membrane as a helical segment. Residues Leu147 to Ser166 are Cytoplasmic-facing. A helical membrane pass occupies residues Phe167–Phe187. Over Arg188–Gly217 the chain is Extracellular. A helical membrane pass occupies residues Thr218–Val238. The Cytoplasmic portion of the chain corresponds to Ser239–Lys269. The helical transmembrane segment at Met270–Leu290 threads the bilayer. Over Ala291–Lys305 the chain is Extracellular. A helical membrane pass occupies residues Leu306 to Tyr326. Topologically, residues Gly327–Val381 are cytoplasmic. A lipid anchor (S-palmitoyl cysteine) is attached at Cys343.

It belongs to the G-protein coupled receptor 1 family.

The protein localises to the cell membrane. Receptor for neuropeptide Y and peptide YY. This is Neuropeptide Y receptor type 2 (NPY2R) from Cavia porcellus (Guinea pig).